The chain runs to 449 residues: Trigger factor (449 aa).

Positions 172 to 257 (GDRVTVDFVG…LKQVEWAHLP (86 aa)) constitute a PPIase FKBP-type domain.

The protein belongs to the FKBP-type PPIase family. Tig subfamily.

The protein resides in the cytoplasm. It carries out the reaction [protein]-peptidylproline (omega=180) = [protein]-peptidylproline (omega=0). Functionally, involved in protein export. Acts as a chaperone by maintaining the newly synthesized protein in an open conformation. Functions as a peptidyl-prolyl cis-trans isomerase. This chain is Trigger factor, found in Ralstonia nicotianae (strain ATCC BAA-1114 / GMI1000) (Ralstonia solanacearum).